A 471-amino-acid polypeptide reads, in one-letter code: tRNA-2-methylthio-N(6)-dimethylallyladenosine synthase (471 aa).

The MTTase N-terminal domain occupies 31–149; the sequence is LYYHIETYGC…FPQLLWEALN (119 aa). [4Fe-4S] cluster is bound by residues Cys40, Cys76, Cys110, Cys186, Cys190, and Cys193. One can recognise a Radical SAM core domain in the interval 172–402; the sequence is RDSNLKAWVN…IELQNKISLE (231 aa). Residues 405–468 form the TRAM domain; it reads AELRGKIVEV…AWTMQGELVE (64 aa).

This sequence belongs to the methylthiotransferase family. MiaB subfamily. In terms of assembly, monomer. The cofactor is [4Fe-4S] cluster.

The protein localises to the cytoplasm. The catalysed reaction is N(6)-dimethylallyladenosine(37) in tRNA + (sulfur carrier)-SH + AH2 + 2 S-adenosyl-L-methionine = 2-methylsulfanyl-N(6)-dimethylallyladenosine(37) in tRNA + (sulfur carrier)-H + 5'-deoxyadenosine + L-methionine + A + S-adenosyl-L-homocysteine + 2 H(+). Its function is as follows. Catalyzes the methylthiolation of N6-(dimethylallyl)adenosine (i(6)A), leading to the formation of 2-methylthio-N6-(dimethylallyl)adenosine (ms(2)i(6)A) at position 37 in tRNAs that read codons beginning with uridine. This is tRNA-2-methylthio-N(6)-dimethylallyladenosine synthase from Thermoanaerobacter pseudethanolicus (strain ATCC 33223 / 39E) (Clostridium thermohydrosulfuricum).